Consider the following 20-residue polypeptide: Protein PR-L2 (20 aa).

The segment at 1-20 is disordered; the sequence is SVFAFENEQSSTIAPARLYK.

It belongs to the BetVI family.

The sequence is that of Protein PR-L2 from Lupinus luteus (European yellow lupine).